The chain runs to 252 residues: ATP synthase subunit a, chloroplastic (252 aa).

The next 5 helical transmembrane spans lie at 41–61, 100–120, 138–158, 204–224, and 225–245; these read GQVL…TLLA, VPFL…GALL, DINT…YAGI, LIVG…LMLL, and GVFT…AYIG.

It belongs to the ATPase A chain family. As to quaternary structure, F-type ATPases have 2 components, CF(1) - the catalytic core - and CF(0) - the membrane proton channel. CF(1) has five subunits: alpha(3), beta(3), gamma(1), delta(1), epsilon(1). CF(0) has four main subunits: a, b, b' and c.

It is found in the plastid. The protein localises to the chloroplast thylakoid membrane. Key component of the proton channel; it plays a direct role in the translocation of protons across the membrane. The chain is ATP synthase subunit a, chloroplastic from Oedogonium cardiacum (Filamentous green alga).